The following is a 255-amino-acid chain: Thiazole synthase (255 aa).

K96 functions as the Schiff-base intermediate with DXP in the catalytic mechanism. Residues G157, 183–184 (AG), and 205–206 (NT) each bind 1-deoxy-D-xylulose 5-phosphate.

The protein belongs to the ThiG family. In terms of assembly, homotetramer. Forms heterodimers with either ThiH or ThiS.

The protein resides in the cytoplasm. The enzyme catalyses [ThiS sulfur-carrier protein]-C-terminal-Gly-aminoethanethioate + 2-iminoacetate + 1-deoxy-D-xylulose 5-phosphate = [ThiS sulfur-carrier protein]-C-terminal Gly-Gly + 2-[(2R,5Z)-2-carboxy-4-methylthiazol-5(2H)-ylidene]ethyl phosphate + 2 H2O + H(+). Its pathway is cofactor biosynthesis; thiamine diphosphate biosynthesis. Its function is as follows. Catalyzes the rearrangement of 1-deoxy-D-xylulose 5-phosphate (DXP) to produce the thiazole phosphate moiety of thiamine. Sulfur is provided by the thiocarboxylate moiety of the carrier protein ThiS. In vitro, sulfur can be provided by H(2)S. In Heliobacterium modesticaldum (strain ATCC 51547 / Ice1), this protein is Thiazole synthase.